The following is a 380-amino-acid chain: F-box protein At4g18380 (380 aa).

One can recognise an F-box domain in the interval 22–70 (IDHFDNLPDSILLLIFNNIGDVKALGRCSVVSKRFHSLIPQVENVFVRV).

The protein is F-box protein At4g18380 of Arabidopsis thaliana (Mouse-ear cress).